The sequence spans 295 residues: Protoheme IX farnesyltransferase (295 aa).

A run of 9 helical transmembrane segments spans residues Ile8 to Ala28, Gly35 to Phe55, Gly83 to Gly103, Leu107 to Leu127, Ile132 to Ala152, Leu162 to Phe182, Ile208 to Ala228, Gly229 to Arg249, and Val263 to Gln283.

It belongs to the UbiA prenyltransferase family. Protoheme IX farnesyltransferase subfamily.

It localises to the cell inner membrane. The catalysed reaction is heme b + (2E,6E)-farnesyl diphosphate + H2O = Fe(II)-heme o + diphosphate. It functions in the pathway porphyrin-containing compound metabolism; heme O biosynthesis; heme O from protoheme: step 1/1. In terms of biological role, converts heme B (protoheme IX) to heme O by substitution of the vinyl group on carbon 2 of heme B porphyrin ring with a hydroxyethyl farnesyl side group. The chain is Protoheme IX farnesyltransferase from Chromohalobacter salexigens (strain ATCC BAA-138 / DSM 3043 / CIP 106854 / NCIMB 13768 / 1H11).